A 419-amino-acid chain; its full sequence is E3 ubiquitin-protein ligase RNF130 (419 aa).

Positions 1–27 (MSGAARAGPARLAALALLTCSLWPTRA) are cleaved as a signal peptide. The Extracellular segment spans residues 28 to 194 (DNASQEYYTA…MPPKNFSRGS (167 aa)). N-linked (GlcNAc...) asparagine glycans are attached at residues Asn-29, Asn-40, Asn-112, Asn-135, Asn-172, and Asn-189. The PA domain occupies 105 to 176 (IALLQRGNCT…SYLEKNISVQ (72 aa)). The chain crosses the membrane as a helical span at residues 195–217 (LVFVSISFIVLMIISSAWLIFYF). At 218-419 (IQKIRYTNAR…SLNANEVEWF (202 aa)) the chain is on the cytoplasmic side. An RING-type zinc finger spans residues 264 to 305 (CAVCIESYKQNDVVRVLPCKHVFHKSCVDPWLSEHCTCPMCK). A Phosphoserine modification is found at Ser-341.

As to expression, in testis sections, expressed in interstitial tissue and seminiferous tubules. In tubules, expression is mainly in postmeiotic germ cells and to a much lesser extent in Sertoli cells (at protein level). Expressed at high levels in liver, lung, stomach, heart and thymus.

The protein localises to the membrane. It is found in the cytoplasm. It carries out the reaction S-ubiquitinyl-[E2 ubiquitin-conjugating enzyme]-L-cysteine + [acceptor protein]-L-lysine = [E2 ubiquitin-conjugating enzyme]-L-cysteine + N(6)-ubiquitinyl-[acceptor protein]-L-lysine.. The protein operates within protein modification; protein ubiquitination. Functionally, acts as an E3 ubiquitin-protein ligase. May have a role during the programmed cell death of hematopoietic cells. This is E3 ubiquitin-protein ligase RNF130 from Rattus norvegicus (Rat).